We begin with the raw amino-acid sequence, 336 residues long: tRNA N6-adenosine threonylcarbamoyltransferase (336 aa).

Positions 114 and 118 each coordinate Fe cation. Residues 136–140 (LVSGG), aspartate 169, glycine 182, aspartate 186, and asparagine 275 each bind substrate. A Fe cation-binding site is contributed by aspartate 301.

It belongs to the KAE1 / TsaD family. The cofactor is Fe(2+).

Its subcellular location is the cytoplasm. The catalysed reaction is L-threonylcarbamoyladenylate + adenosine(37) in tRNA = N(6)-L-threonylcarbamoyladenosine(37) in tRNA + AMP + H(+). Required for the formation of a threonylcarbamoyl group on adenosine at position 37 (t(6)A37) in tRNAs that read codons beginning with adenine. Is involved in the transfer of the threonylcarbamoyl moiety of threonylcarbamoyl-AMP (TC-AMP) to the N6 group of A37, together with TsaE and TsaB. TsaD likely plays a direct catalytic role in this reaction. In Streptococcus pneumoniae serotype 4 (strain ATCC BAA-334 / TIGR4), this protein is tRNA N6-adenosine threonylcarbamoyltransferase.